Here is a 375-residue protein sequence, read N- to C-terminus: E3 ubiquitin-protein ligase RHF2A (375 aa).

Residues 33 to 74 (CSICLESFCESDPSTLTSCKHEYHLQCILEWCQRSSQCPMCW) form an RING-type; atypical zinc finger. Basic residues predominate over residues 146–159 (RARHGVRREGHRSR). Disordered stretches follow at residues 146 to 165 (RARHGVRREGHRSRSSSQGH), 172 to 262 (SSQP…SESL), and 318 to 375 (ERLE…SGSS). Over residues 178–188 (SSPPPHPPMPS) the composition is skewed to pro residues. Composition is skewed to polar residues over residues 211–245 (SHQSNTQPPTSSHPRQVSPSASDSNSRPLNQSSPS) and 327–336 (RPSTASVSDV). A compositionally biased stretch (basic and acidic residues) spans 337 to 365 (SENHTPETNNEHNRAAAGDEHSVNERGVK).

It catalyses the reaction S-ubiquitinyl-[E2 ubiquitin-conjugating enzyme]-L-cysteine + [acceptor protein]-L-lysine = [E2 ubiquitin-conjugating enzyme]-L-cysteine + N(6)-ubiquitinyl-[acceptor protein]-L-lysine.. It participates in protein modification; protein ubiquitination. Its function is as follows. E3 ubiquitin-protein ligase involved in the positive regulation of the gametogenesis progression. Required for the degradation of KRP6, a cyclin-dependent kinase inhibitor which accumulates during meiosis and blocks the progression of subsequent mitoses during gametophytes development. Functions in association with RHF1A. The sequence is that of E3 ubiquitin-protein ligase RHF2A from Arabidopsis thaliana (Mouse-ear cress).